We begin with the raw amino-acid sequence, 336 residues long: Dihydroorotate dehydrogenase (quinone) (336 aa).

FMN contacts are provided by residues 62-66 (AGLDK) and T86. A substrate-binding site is contributed by K66. 111–115 (NRMGF) contacts substrate. FMN is bound by residues N139 and N172. N172 is a substrate binding site. S175 (nucleophile) is an active-site residue. N177 is a binding site for substrate. Residues K217 and T245 each contribute to the FMN site. 246–247 (NT) contributes to the substrate binding site. Residues G268, G297, and 318 to 319 (YS) each bind FMN.

Belongs to the dihydroorotate dehydrogenase family. Type 2 subfamily. Monomer. It depends on FMN as a cofactor.

The protein resides in the cell membrane. The enzyme catalyses (S)-dihydroorotate + a quinone = orotate + a quinol. The protein operates within pyrimidine metabolism; UMP biosynthesis via de novo pathway; orotate from (S)-dihydroorotate (quinone route): step 1/1. Functionally, catalyzes the conversion of dihydroorotate to orotate with quinone as electron acceptor. The sequence is that of Dihydroorotate dehydrogenase (quinone) from Psychromonas ingrahamii (strain DSM 17664 / CCUG 51855 / 37).